We begin with the raw amino-acid sequence, 510 residues long: Cytochrome P450 90D2 (510 aa).

Residues Met-6–Val-26 form a helical membrane-spanning segment. Cys-444 is a binding site for heme.

It belongs to the cytochrome P450 family. Requires heme as cofactor.

The protein localises to the membrane. It catalyses the reaction 3-epi-6-deoxocathasterone + reduced [NADPH--hemoprotein reductase] + O2 = 6-deoxotyphasterol + oxidized [NADPH--hemoprotein reductase] + H2O + H(+). The enzyme catalyses (22S,24R)-22-hydroxy-5alpha-ergostan-3-one + reduced [NADPH--hemoprotein reductase] + O2 = 3-dehydro-6-deoxoteasterone + oxidized [NADPH--hemoprotein reductase] + H2O + H(+). The catalysed reaction is 6-deoxycathasterone + reduced [NADPH--hemoprotein reductase] + O2 = 6-deoxoteasterone + oxidized [NADPH--hemoprotein reductase] + H2O + H(+). Its pathway is plant hormone biosynthesis; brassinosteroid biosynthesis. Functionally, involved in reduction steps of the biosynthesis of plant campesterol-derivative steroids, ending to castasterone (CS) but missing brassinolide (BL). Catalyzes the conversion of (22S,24R)-22-hydroxy-5alpha-ergostan-3-one (22-hydroxy-campesta-3-one, 22-OH-3-one) to 3-dehydro-6-deoxoteasterone (6-deoxo3DT, 6-deoxo-3-DHT), 3-epi-6-deoxocathasterone (3-epi-6-deoxoCT) to 6-deoxotyphasterol (6-deoxoTY) and of 6-deoxocathasterone (6-deoxoCT) to 6-deoxoteasterone (6-deoxoTE). This Brachypodium distachyon (Purple false brome) protein is Cytochrome P450 90D2.